A 448-amino-acid polypeptide reads, in one-letter code: Tryptophan--tRNA ligase (448 aa).

ATP contacts are provided by residues 10–12 (TPT) and 18–19 (GN). Positions 11–19 (PTGTPHLGN) match the 'HIGH' region motif. Asp143 provides a ligand contact to L-tryptophan. ATP-binding positions include 155–157 (GRD), Leu197, and 204–208 (KMSKS). The 'KMSKS' region motif lies at 204-208 (KMSKS).

It belongs to the class-I aminoacyl-tRNA synthetase family. As to quaternary structure, homodimer.

It is found in the cytoplasm. The enzyme catalyses tRNA(Trp) + L-tryptophan + ATP = L-tryptophyl-tRNA(Trp) + AMP + diphosphate + H(+). Functionally, catalyzes the attachment of tryptophan to tRNA(Trp). The chain is Tryptophan--tRNA ligase from Pseudomonas aeruginosa (strain ATCC 15692 / DSM 22644 / CIP 104116 / JCM 14847 / LMG 12228 / 1C / PRS 101 / PAO1).